A 367-amino-acid polypeptide reads, in one-letter code: Isocitrate dehydrogenase [NAD] regulatory subunit 2, mitochondrial (367 aa).

The transit peptide at 1–25 directs the protein to the mitochondrion; it reads MSRQSFSLLKNLRSIASGSKIQTRS.

Belongs to the isocitrate and isopropylmalate dehydrogenases family. As to quaternary structure, heterooligomer of catalytic and regulatory subunits. Ubiquitous. Predominantly expressed in roots, stems and leaves.

Its subcellular location is the mitochondrion. Its function is as follows. Performs an essential role in the oxidative function of the citric acid cycle. This Arabidopsis thaliana (Mouse-ear cress) protein is Isocitrate dehydrogenase [NAD] regulatory subunit 2, mitochondrial (IDH2).